Here is a 220-residue protein sequence, read N- to C-terminus: MKEYDYLFKIIVIGDSGTGKSSLLLRFADNTYSESYMSTIGVDFKIKTVKIDNTTIKLQIWDTAGQERFRTITSTYYRGAHGIICVYDVTNKLSFDHITETWLQDIDKYATSNVCKLLIGNKIDLVDSRVVLADEAKHVAEQNNMNYIEASAKTDSNVEKAFTTIAKALKDKVTQYPSNAPTSTVNLSNASKVTTNRGISDSCQESSVFKKMNFSSGKCT.

14–21 (GDSGTGKS) is a GTP binding site. An Effector region motif is present at residues 36–44 (YMSTIGVDF). GTP-binding positions include 62 to 66 (DTAGQ) and 121 to 124 (NKID). C219 carries the S-geranylgeranyl cysteine lipid modification.

This sequence belongs to the small GTPase superfamily. Rab family.

It is found in the cell membrane. In terms of biological role, protein transport. Probably involved in vesicular traffic from ER to Golgi. This chain is Ras-related protein Rab-1 (rab1), found in Theileria annulata.